A 211-amino-acid chain; its full sequence is ATP-dependent Clp protease proteolytic subunit (211 aa).

Catalysis depends on Ser-107, which acts as the Nucleophile. His-132 is a catalytic residue.

It belongs to the peptidase S14 family. Fourteen ClpP subunits assemble into 2 heptameric rings which stack back to back to give a disk-like structure with a central cavity, resembling the structure of eukaryotic proteasomes.

It localises to the cytoplasm. The enzyme catalyses Hydrolysis of proteins to small peptides in the presence of ATP and magnesium. alpha-casein is the usual test substrate. In the absence of ATP, only oligopeptides shorter than five residues are hydrolyzed (such as succinyl-Leu-Tyr-|-NHMec, and Leu-Tyr-Leu-|-Tyr-Trp, in which cleavage of the -Tyr-|-Leu- and -Tyr-|-Trp bonds also occurs).. Functionally, cleaves peptides in various proteins in a process that requires ATP hydrolysis. Has a chymotrypsin-like activity. Plays a major role in the degradation of misfolded proteins. In Xanthobacter autotrophicus (strain ATCC BAA-1158 / Py2), this protein is ATP-dependent Clp protease proteolytic subunit.